A 207-amino-acid chain; its full sequence is Probable isochorismatase (207 aa).

This sequence belongs to the isochorismatase family.

It catalyses the reaction isochorismate + H2O = (2S,3S)-2,3-dihydroxy-2,3-dihydrobenzoate + pyruvate. It functions in the pathway antibiotic biosynthesis; phenazine biosynthesis. Its function is as follows. Involved in the biosynthesis of the antibiotic phenazine, a nitrogen-containing heterocyclic molecule having important roles in virulence, competition and biological control. This isochorismatase may remove pyruvate from chorismate during the formation of the phenazine ring structure and/or stabilize the phenazine biosynthetic complex. The chain is Probable isochorismatase (phzA) from Pseudomonas chlororaphis (Pseudomonas aureofaciens).